Here is a 426-residue protein sequence, read N- to C-terminus: Probable glucose-6-phosphate isomerase (426 aa).

The active-site Proton donor is glutamate 272. Catalysis depends on residues histidine 293 and lysine 404.

The protein belongs to the GPI family.

It is found in the cytoplasm. It carries out the reaction alpha-D-glucose 6-phosphate = beta-D-fructose 6-phosphate. It participates in carbohydrate biosynthesis; gluconeogenesis. Its pathway is carbohydrate degradation; glycolysis; D-glyceraldehyde 3-phosphate and glycerone phosphate from D-glucose: step 2/4. Functionally, catalyzes the reversible isomerization of glucose-6-phosphate to fructose-6-phosphate. The polypeptide is Probable glucose-6-phosphate isomerase (Halobacterium salinarum (strain ATCC 700922 / JCM 11081 / NRC-1) (Halobacterium halobium)).